A 346-amino-acid chain; its full sequence is N-acetyl-gamma-glutamyl-phosphate reductase (346 aa).

C149 is an active-site residue.

This sequence belongs to the NAGSA dehydrogenase family. Type 1 subfamily.

It is found in the cytoplasm. It catalyses the reaction N-acetyl-L-glutamate 5-semialdehyde + phosphate + NADP(+) = N-acetyl-L-glutamyl 5-phosphate + NADPH + H(+). It participates in amino-acid biosynthesis; L-arginine biosynthesis; N(2)-acetyl-L-ornithine from L-glutamate: step 3/4. In terms of biological role, catalyzes the NADPH-dependent reduction of N-acetyl-5-glutamyl phosphate to yield N-acetyl-L-glutamate 5-semialdehyde. This Oceanobacillus iheyensis (strain DSM 14371 / CIP 107618 / JCM 11309 / KCTC 3954 / HTE831) protein is N-acetyl-gamma-glutamyl-phosphate reductase.